The sequence spans 101 residues: Iron-sulfur cluster assembly protein CyaY (101 aa).

Belongs to the frataxin family.

Functionally, involved in iron-sulfur (Fe-S) cluster assembly. May act as a regulator of Fe-S biogenesis. The sequence is that of Iron-sulfur cluster assembly protein CyaY from Rickettsia felis (strain ATCC VR-1525 / URRWXCal2) (Rickettsia azadi).